The chain runs to 249 residues: Isoprenyl transferase (249 aa).

Asp-25 is an active-site residue. Asp-25 is a binding site for Mg(2+). Residues Gly-26 to Arg-29, Trp-30, Arg-38, His-42, and Ser-70 to Glu-72 contribute to the substrate site. Asn-73 serves as the catalytic Proton acceptor. Residues Trp-74, Arg-76, Arg-197, and Arg-203 to Ser-205 each bind substrate. Glu-216 is a binding site for Mg(2+).

It belongs to the UPP synthase family. In terms of assembly, homodimer. Mg(2+) is required as a cofactor.

Functionally, catalyzes the condensation of isopentenyl diphosphate (IPP) with allylic pyrophosphates generating different type of terpenoids. The protein is Isoprenyl transferase of Streptococcus pyogenes serotype M6 (strain ATCC BAA-946 / MGAS10394).